The primary structure comprises 296 residues: Nucleotide-binding protein spyM18_0713 (296 aa).

13–20 (GMSGAGKT) is an ATP binding site. A GTP-binding site is contributed by 63-66 (DMRS).

Belongs to the RapZ-like family.

Its function is as follows. Displays ATPase and GTPase activities. This chain is Nucleotide-binding protein spyM18_0713, found in Streptococcus pyogenes serotype M18 (strain MGAS8232).